Reading from the N-terminus, the 209-residue chain is Outer-membrane lipoprotein LolB (209 aa).

A signal peptide spans 1-17 (MKKSTLLFSLMAMALSG). Residue Cys-18 is the site of N-palmitoyl cysteine attachment. The S-diacylglycerol cysteine moiety is linked to residue Cys-18.

The protein belongs to the LolB family. As to quaternary structure, monomer.

It is found in the cell outer membrane. Plays a critical role in the incorporation of lipoproteins in the outer membrane after they are released by the LolA protein. This is Outer-membrane lipoprotein LolB from Haemophilus ducreyi (strain 35000HP / ATCC 700724).